Here is a 588-residue protein sequence, read N- to C-terminus: L-fucose isomerase (588 aa).

Catalysis depends on proton acceptor residues E335 and D359. 3 residues coordinate Mn(2+): E335, D359, and H525.

Belongs to the L-fucose isomerase family. It depends on Mn(2+) as a cofactor.

It localises to the cytoplasm. The catalysed reaction is L-fucose = L-fuculose. Its pathway is carbohydrate degradation; L-fucose degradation; L-lactaldehyde and glycerone phosphate from L-fucose: step 1/3. Functionally, converts the aldose L-fucose into the corresponding ketose L-fuculose. In Streptococcus pneumoniae (strain JJA), this protein is L-fucose isomerase.